The following is a 152-amino-acid chain: Histone deacetylase complex subunit SAP18 (152 aa).

Residues 1–38 (MAEAARRQGGGRPLPPPPRGVNQQPPRPKPEPVDREKT) are disordered. Basic and acidic residues predominate over residues 28 to 38 (PKPEPVDREKT).

This sequence belongs to the SAP18 family. In terms of assembly, interacts with SIN3, ERF3, ERF4 and HDA19. Ubiquitous, with low level in flowers.

Functionally, links the histone deacetylase complex to transcriptional repressors bound to chromatin. Involved in the tethering of the SIN3 complex to core histone proteins. The sequence is that of Histone deacetylase complex subunit SAP18 from Arabidopsis thaliana (Mouse-ear cress).